A 640-amino-acid polypeptide reads, in one-letter code: ATP-dependent rRNA helicase spb4 (640 aa).

Residues 14 to 42 (WDAVTPALSEWVLEAMSSMGFTRMTPVQA) carry the Q motif motif. Positions 45–249 (IPLFMAHKDV…RVGLRNPVKV (205 aa)) constitute a Helicase ATP-binding domain. Position 58–65 (58–65 (AVTGSGKT)) interacts with ATP. The DEAD box motif lies at 197–200 (DEAD). Residues 283 to 437 (ALKRIVSSVQ…SISFSDADAA (155 aa)) enclose the Helicase C-terminal domain. A coiled-coil region spans residues 521 to 629 (AYKDKQREKR…VAKAAGAKAD (109 aa)). Disordered regions lie at residues 531–593 (RKEL…EEEK) and 607–640 (RKKNEEERRLRRAVAKAAGAKADGDDEEEFQGFD). Residues 577 to 593 (KSKQEKARWEKMTEEEK) are compositionally biased toward basic and acidic residues. The span at 630–640 (GDDEEEFQGFD) shows a compositional bias: acidic residues.

It belongs to the DEAD box helicase family. DDX55/SPB4 subfamily. As to quaternary structure, component of pre-60S ribosomal complexes.

Its subcellular location is the nucleus. It is found in the nucleolus. The catalysed reaction is ATP + H2O = ADP + phosphate + H(+). In terms of biological role, ATP-binding RNA helicase involved in the biogenesis of 60S ribosomal subunits. Binds 90S pre-ribosomal particles and dissociates from pre-60S ribosomal particles after processing of 27SB pre-rRNA. Required for the normal formation of 18S rRNA through the processing of pre-rRNAs at sites A0, A1 and A2, and the normal formation of 25S and 5.8S rRNAs through the processing of pre-rRNAs at sites C1 and C2. This Aspergillus fumigatus (strain ATCC MYA-4609 / CBS 101355 / FGSC A1100 / Af293) (Neosartorya fumigata) protein is ATP-dependent rRNA helicase spb4.